A 61-amino-acid polypeptide reads, in one-letter code: Putative antitoxin PYRAB11980 (61 aa).

This sequence belongs to the UPF0165 family.

Functionally, possibly the antitoxin component of a type II toxin-antitoxin (TA) system. This Pyrococcus abyssi (strain GE5 / Orsay) protein is Putative antitoxin PYRAB11980.